Consider the following 460-residue polypeptide: Cysteine--tRNA ligase (460 aa).

A Zn(2+)-binding site is contributed by cysteine 28. The 'HIGH' region signature appears at methionine 30–histidine 40. Positions 209, 234, and 238 each coordinate Zn(2+). The short motif at lysine 266–serine 270 is the 'KMSKS' region element. Position 269 (lysine 269) interacts with ATP.

It belongs to the class-I aminoacyl-tRNA synthetase family. As to quaternary structure, monomer. Zn(2+) is required as a cofactor.

It is found in the cytoplasm. It carries out the reaction tRNA(Cys) + L-cysteine + ATP = L-cysteinyl-tRNA(Cys) + AMP + diphosphate. This chain is Cysteine--tRNA ligase, found in Thioalkalivibrio sulfidiphilus (strain HL-EbGR7).